Here is a 143-residue protein sequence, read N- to C-terminus: Nucleoside diphosphate kinase (143 aa).

Residues K11, F59, R87, T93, R104, and N114 each coordinate ATP. H117 acts as the Pros-phosphohistidine intermediate in catalysis.

It belongs to the NDK family. As to quaternary structure, homotetramer. The cofactor is Mg(2+).

It localises to the cytoplasm. It carries out the reaction a 2'-deoxyribonucleoside 5'-diphosphate + ATP = a 2'-deoxyribonucleoside 5'-triphosphate + ADP. It catalyses the reaction a ribonucleoside 5'-diphosphate + ATP = a ribonucleoside 5'-triphosphate + ADP. In terms of biological role, major role in the synthesis of nucleoside triphosphates other than ATP. The ATP gamma phosphate is transferred to the NDP beta phosphate via a ping-pong mechanism, using a phosphorylated active-site intermediate. This Salmonella arizonae (strain ATCC BAA-731 / CDC346-86 / RSK2980) protein is Nucleoside diphosphate kinase.